The chain runs to 117 residues: Ribonuclease P protein component (117 aa).

It belongs to the RnpA family. As to quaternary structure, consists of a catalytic RNA component (M1 or rnpB) and a protein subunit.

It catalyses the reaction Endonucleolytic cleavage of RNA, removing 5'-extranucleotides from tRNA precursor.. In terms of biological role, RNaseP catalyzes the removal of the 5'-leader sequence from pre-tRNA to produce the mature 5'-terminus. It can also cleave other RNA substrates such as 4.5S RNA. The protein component plays an auxiliary but essential role in vivo by binding to the 5'-leader sequence and broadening the substrate specificity of the ribozyme. The protein is Ribonuclease P protein component of Thermotoga maritima (strain ATCC 43589 / DSM 3109 / JCM 10099 / NBRC 100826 / MSB8).